Reading from the N-terminus, the 288-residue chain is Putative branched-chain-amino-acid aminotransferase (288 aa).

N6-(pyridoxal phosphate)lysine is present on Lys146.

Belongs to the class-IV pyridoxal-phosphate-dependent aminotransferase family. Requires pyridoxal 5'-phosphate as cofactor.

The enzyme catalyses L-leucine + 2-oxoglutarate = 4-methyl-2-oxopentanoate + L-glutamate. It carries out the reaction L-isoleucine + 2-oxoglutarate = (S)-3-methyl-2-oxopentanoate + L-glutamate. It catalyses the reaction L-valine + 2-oxoglutarate = 3-methyl-2-oxobutanoate + L-glutamate. Its pathway is amino-acid biosynthesis; L-isoleucine biosynthesis; L-isoleucine from 2-oxobutanoate: step 4/4. It functions in the pathway amino-acid biosynthesis; L-leucine biosynthesis; L-leucine from 3-methyl-2-oxobutanoate: step 4/4. It participates in amino-acid biosynthesis; L-valine biosynthesis; L-valine from pyruvate: step 4/4. Functionally, acts on leucine, isoleucine and valine. The chain is Putative branched-chain-amino-acid aminotransferase (ilvE) from Methanocaldococcus jannaschii (strain ATCC 43067 / DSM 2661 / JAL-1 / JCM 10045 / NBRC 100440) (Methanococcus jannaschii).